Reading from the N-terminus, the 799-residue chain is Mitochondrial intermediate peptidase (799 aa).

Position 562 (H562) interacts with Zn(2+). E563 is a catalytic residue. H566 and H569 together coordinate Zn(2+).

The protein belongs to the peptidase M3 family. Zn(2+) is required as a cofactor.

It is found in the mitochondrion matrix. It carries out the reaction Release of an N-terminal octapeptide as second stage of processing of some proteins imported into the mitochondrion.. In terms of biological role, cleaves proteins, imported into the mitochondrion, to their mature size. While most mitochondrial precursor proteins are processed to the mature form in one step by mitochondrial processing peptidase (MPP), the sequential cleavage by MIP of an octapeptide after initial processing by MPP is a required step for a subgroup of nuclear-encoded precursor proteins destined for the matrix or the inner membrane. In Aspergillus niger (strain ATCC MYA-4892 / CBS 513.88 / FGSC A1513), this protein is Mitochondrial intermediate peptidase (oct1).